The chain runs to 449 residues: Kynurenine 3-monooxygenase (449 aa).

Belongs to the aromatic-ring hydroxylase family. KMO subfamily. Requires FAD as cofactor.

The catalysed reaction is L-kynurenine + NADPH + O2 + H(+) = 3-hydroxy-L-kynurenine + NADP(+) + H2O. It functions in the pathway cofactor biosynthesis; NAD(+) biosynthesis; quinolinate from L-kynurenine: step 1/3. In terms of biological role, catalyzes the hydroxylation of L-kynurenine (L-Kyn) to form 3-hydroxy-L-kynurenine (L-3OHKyn). Required for synthesis of quinolinic acid. The protein is Kynurenine 3-monooxygenase of Cytophaga hutchinsonii (strain ATCC 33406 / DSM 1761 / CIP 103989 / NBRC 15051 / NCIMB 9469 / D465).